The chain runs to 101 residues: Putative fatty acid-binding protein 5-like protein 3 (101 aa).

The protein belongs to the calycin superfamily. Fatty-acid binding protein (FABP) family.

Functionally, high specificity for fatty acids. This Homo sapiens (Human) protein is Putative fatty acid-binding protein 5-like protein 3 (FABP5P3).